Here is a 101-residue protein sequence, read N- to C-terminus: NAD(P)H-quinone oxidoreductase subunit 4L, chloroplastic (101 aa).

3 consecutive transmembrane segments (helical) span residues 2-22 (MLEH…YGLI), 32-52 (MCLE…SDFF), and 61-81 (IFSI…SAIV).

Belongs to the complex I subunit 4L family. In terms of assembly, NDH is composed of at least 16 different subunits, 5 of which are encoded in the nucleus.

It localises to the plastid. The protein localises to the chloroplast thylakoid membrane. The enzyme catalyses a plastoquinone + NADH + (n+1) H(+)(in) = a plastoquinol + NAD(+) + n H(+)(out). It carries out the reaction a plastoquinone + NADPH + (n+1) H(+)(in) = a plastoquinol + NADP(+) + n H(+)(out). Its function is as follows. NDH shuttles electrons from NAD(P)H:plastoquinone, via FMN and iron-sulfur (Fe-S) centers, to quinones in the photosynthetic chain and possibly in a chloroplast respiratory chain. The immediate electron acceptor for the enzyme in this species is believed to be plastoquinone. Couples the redox reaction to proton translocation, and thus conserves the redox energy in a proton gradient. This Gossypium hirsutum (Upland cotton) protein is NAD(P)H-quinone oxidoreductase subunit 4L, chloroplastic.